The sequence spans 570 residues: MPKQADYTWGAKKNLDTIACLPEDVKQFKDLLYAMHGFTATEEEPTSEVQPGAILKGTVVDISKDFVVVDVGLKSEGVIPMSEFIDSSEGLSVGAEVEVYLDQTEDEEGKVVLSREKATRQRQWEYILAHCEEGSIVKGQITRKVKGGLIVDIGMEAFLPGSQIDNKKIKNLDDYVGKVCEFKILKINVDRRNVVVSRRELLEAERISKKAELIEQITIGERRKGIVKNITDFGVFLDLDGIDGLLHITDMTWKRIRHPSEMVELNQELEVIILSVDKEKGRVALGLKQKEHNPWEDIEKKYPPGKRVRGKIVKLLPYGAFIEIEEGIEGLIHVSEMSWVKNIVDPNEVVNKGDEVEVVVLSIQKDEGKISLGLKQTEHNPWDNIEEKYPIGLRVTAEIKNLTNYGAFVELEPGIEGLIHISDMSWIKKVSHPSELFKKGNTVEAVILSVDKESKKITLGVKQLTPNPWDEIEAMFPVGSDISGIVTKITAFGAFVELQNGIEGLIHVSKLSDKPFAKIEDILSIGDKVSAKVIKLDPDHKKVSLSIKEFLAHGGHAGQDAEEETSSNRD.

S1 motif domains are found at residues 52-116, 134-199, 220-288, 305-375, 392-462, and 479-548; these read GAIL…LSRE, GSIV…VSRR, GERR…LGLK, GKRV…LGLK, GLRV…LGVK, and GSDI…LSIK.

Belongs to the bacterial ribosomal protein bS1 family.

Functionally, binds mRNA; thus facilitating recognition of the initiation point. It is needed to translate mRNA with a short Shine-Dalgarno (SD) purine-rich sequence. This chain is Small ribosomal subunit protein bS1 (rpsA), found in Chlamydia muridarum (strain MoPn / Nigg).